A 597-amino-acid chain; its full sequence is Membrane protein insertase YidC (597 aa).

The helical transmembrane segment at 8 to 28 (YFVAIALSVLILIAWQFFYVS) threads the bilayer. Residues 38 to 75 (AEKAQQAQSQPGTQQAAPGQAAPGQALPGGAIPSAAES) form a disordered region. The span at 41–70 (AQQAQSQPGTQQAAPGQAAPGQALPGGAIP) shows a compositional bias: low complexity. 4 helical membrane passes run 372–392 (LFGN…LIFF), 446–466 (WPIL…YVTI), 491–511 (LFGL…WPIV), and 535–555 (FTWM…GLVI).

This sequence belongs to the OXA1/ALB3/YidC family. Type 1 subfamily. In terms of assembly, interacts with the Sec translocase complex via SecD. Specifically interacts with transmembrane segments of nascent integral membrane proteins during membrane integration.

It is found in the cell inner membrane. Functionally, required for the insertion and/or proper folding and/or complex formation of integral membrane proteins into the membrane. Involved in integration of membrane proteins that insert both dependently and independently of the Sec translocase complex, as well as at least some lipoproteins. Aids folding of multispanning membrane proteins. This is Membrane protein insertase YidC from Sinorhizobium medicae (strain WSM419) (Ensifer medicae).